Here is an 855-residue protein sequence, read N- to C-terminus: MSEISKEYNFKEVEEKWIERWDPSVYYFDWGSEKPQYIIDTPPPYPTGNFHIGNALNWCYIDFVARYKRMRGYNVMFPQGWDCHGLPTEVKVEETYHITKNQVPREEFRRLCEEMTAQAIERMRRTITRLGISTDWSNEYITMKPEYYVKTQRSFVQMYEKGMIYREDHPVNWCPRCATAIAFAEVEYDTRTTTLNYMRFESDHGCLEIATTRPELLPACVAVAVNPNDERHIGFVGKSVKVPLFDYEVPVLSDPAVDPSFGTGVVMICTFGDKQDVRWWVEHKLPLRQAIDREGRLTEIAGKFGGMSITEAKKAIVDEMLSRGIIYRQEPLEQNVGLCWRCKTPIEILSERQWFVRIYPDVIIKTADEIEWVPEHMKLRLKNWTGTMEWDWCISRQRVFATPIPAWYCKRCGEVMVAKEEWLPLDPTKTQPPVSCSCGSNEFEPEEDVLDTWMDSSISALHVTGWLSREDPRYPAQLRPQGHDIIRTWAFYTILRSMALVGVKPWETILINGMVLGEDGRKMSKSLNNFVIPEEVFEKNGADALRQWAALGGSPGSDVMFQWKEIVAASRFQQKLWSIYRFAAPFASDTDAPFTQIDRWLLGELGMLVSKVTDAMEAFQFDEAFRAIRAFTWEVLADDYIEIVKSRLYGPDSDERRAAQATLYRVLDVLCRLMAPFIPFITEEIYTSLTGKSVHTQSWPSLETYTSPEGALIREIAAAIRRYKSERGMALNAPLSGIEIYTELELETFDLRGVANAPIQLRKGQPEIESRAVAVKPVMRFIGPRYKDQAGKIIKKLTSMDPADVERMLASGRVEIEGAEITPEMVEIVRETLSMGEAVDVLRLDRATLLIRRSS.

The 'HIGH' region signature appears at 44–54; sequence PYPTGNFHIGN. The short motif at 522 to 526 is the 'KMSKS' region element; it reads KMSKS. Lys525 is an ATP binding site.

The protein belongs to the class-I aminoacyl-tRNA synthetase family. ValS type 2 subfamily.

It is found in the cytoplasm. The enzyme catalyses tRNA(Val) + L-valine + ATP = L-valyl-tRNA(Val) + AMP + diphosphate. Its function is as follows. Catalyzes the attachment of valine to tRNA(Val). As ValRS can inadvertently accommodate and process structurally similar amino acids such as threonine, to avoid such errors, it has a 'posttransfer' editing activity that hydrolyzes mischarged Thr-tRNA(Val) in a tRNA-dependent manner. This is Valine--tRNA ligase from Methanothrix thermoacetophila (strain DSM 6194 / JCM 14653 / NBRC 101360 / PT) (Methanosaeta thermophila).